The primary structure comprises 560 residues: Formate--tetrahydrofolate ligase (560 aa).

69 to 76 (TPAGEGKS) provides a ligand contact to ATP.

This sequence belongs to the formate--tetrahydrofolate ligase family.

It carries out the reaction (6S)-5,6,7,8-tetrahydrofolate + formate + ATP = (6R)-10-formyltetrahydrofolate + ADP + phosphate. The protein operates within one-carbon metabolism; tetrahydrofolate interconversion. This is Formate--tetrahydrofolate ligase from Listeria monocytogenes serotype 4a (strain HCC23).